The primary structure comprises 530 residues: Phosphoenolpyruvate carboxykinase (ATP) (530 aa).

Substrate contacts are provided by Arg-60, Tyr-195, and Lys-201. ATP-binding positions include Lys-201, His-221, and Gly-237–Thr-245. Positions 201 and 221 each coordinate Mn(2+). Residue Asp-258 participates in Mn(2+) binding. Residues Glu-286, Arg-324, and Ser-449 each contribute to the ATP site. A substrate-binding site is contributed by Arg-324.

Belongs to the phosphoenolpyruvate carboxykinase (ATP) family. It depends on Mn(2+) as a cofactor.

The protein resides in the cytoplasm. The catalysed reaction is oxaloacetate + ATP = phosphoenolpyruvate + ADP + CO2. It functions in the pathway carbohydrate biosynthesis; gluconeogenesis. Involved in the gluconeogenesis. Catalyzes the conversion of oxaloacetate (OAA) to phosphoenolpyruvate (PEP) through direct phosphoryl transfer between the nucleoside triphosphate and OAA. This is Phosphoenolpyruvate carboxykinase (ATP) from Geotalea uraniireducens (strain Rf4) (Geobacter uraniireducens).